The primary structure comprises 369 residues: DNA replication and repair protein RecF (369 aa).

Residue Gly-30–Thr-37 participates in ATP binding.

Belongs to the RecF family.

The protein resides in the cytoplasm. The RecF protein is involved in DNA metabolism; it is required for DNA replication and normal SOS inducibility. RecF binds preferentially to single-stranded, linear DNA. It also seems to bind ATP. The sequence is that of DNA replication and repair protein RecF from Streptococcus equi subsp. zooepidemicus (strain H70).